The following is a 562-amino-acid chain: Phosphoglucomutase-1 (562 aa).

An N-acetylmethionine modification is found at Met-1. Lys-16 is modified (N6-acetyllysine). Residue Arg-23 coordinates alpha-D-glucose 1,6-bisphosphate. The residue at position 115 (Thr-115) is a Phosphothreonine. Residue Ser-117 coordinates alpha-D-glucose 1,6-bisphosphate. Ser-117 functions as the Phosphoserine intermediate in the catalytic mechanism. Ser-117 contributes to the Mg(2+) binding site. A phosphoserine mark is found at Ser-117 and Ser-134. Thr-185 is subject to Phosphothreonine. Ser-213 carries the post-translational modification Phosphoserine. Mg(2+)-binding residues include Asp-288, Asp-290, and Asp-292. 2 residues coordinate alpha-D-glucose 1,6-bisphosphate: Asp-292 and Arg-293. Lys-349 is subject to N6-acetyllysine. Residue Tyr-353 is modified to Phosphotyrosine. Residue Thr-357 participates in alpha-D-glucose 1,6-bisphosphate binding. At Ser-369 the chain carries Phosphoserine. The alpha-D-glucose 1,6-bisphosphate site is built by Glu-376, Ser-378, and Lys-389. Phosphoserine is present on Ser-378. At Lys-419 the chain carries N6-succinyllysine. Thr-467 bears the Phosphothreonine; by PAK1 mark. A phosphoserine mark is found at Ser-485 and Ser-505. Thr-507 is subject to Phosphothreonine. A phosphoserine mark is found at Ser-509 and Ser-541.

Belongs to the phosphohexose mutase family. In terms of assembly, monomer. Mg(2+) is required as a cofactor. In terms of processing, isoform 2 is the major calmodulin-dependent phosphoprotein in junctional skeletal sarcoplasmic reticulum vesicles. Post-translationally, phosphorylation at Thr-467 by PAK1 significantly enhances enzymatic activity.

It is found in the cytoplasm. It localises to the sarcoplasmic reticulum. It carries out the reaction alpha-D-glucose 1-phosphate = alpha-D-glucose 6-phosphate. The enzyme catalyses O-phospho-L-seryl-[protein] + alpha-D-glucose 1-phosphate = alpha-D-glucose 1,6-bisphosphate + L-seryl-[protein]. The catalysed reaction is alpha-D-glucose 1,6-bisphosphate + L-seryl-[protein] = O-phospho-L-seryl-[protein] + alpha-D-glucose 6-phosphate. Its activity is regulated as follows. Glucose-1,6-bisphosphate enhances phosphorylation of the active site Ser-117, and thereby increases enzyme activity. Its function is as follows. Catalyzes the reversible isomerization of alpha-D-glucose 1-phosphate to alpha-D-glucose 6-phosphate. The mechanism proceeds via the intermediate compound alpha-D-glucose 1,6-bisphosphate. This enzyme participates in both the breakdown and synthesis of glucose. In Oryctolagus cuniculus (Rabbit), this protein is Phosphoglucomutase-1 (PGM1).